The chain runs to 366 residues: Ribosomal RNA large subunit methyltransferase M (366 aa).

Residues Ser187, 220–223 (SPGG), Asp239, Asp259, and Asp276 contribute to the S-adenosyl-L-methionine site. Lys305 functions as the Proton acceptor in the catalytic mechanism.

The protein belongs to the class I-like SAM-binding methyltransferase superfamily. RNA methyltransferase RlmE family. RlmM subfamily. In terms of assembly, monomer.

The protein localises to the cytoplasm. The catalysed reaction is cytidine(2498) in 23S rRNA + S-adenosyl-L-methionine = 2'-O-methylcytidine(2498) in 23S rRNA + S-adenosyl-L-homocysteine + H(+). Functionally, catalyzes the 2'-O-methylation at nucleotide C2498 in 23S rRNA. This chain is Ribosomal RNA large subunit methyltransferase M, found in Tolumonas auensis (strain DSM 9187 / NBRC 110442 / TA 4).